Consider the following 338-residue polypeptide: CRISPR system Cmr subunit Cmr1-1 (338 aa).

Belongs to the CRISPR system Cmr1 family. Part of the type III-B Cmr ribonucleoprotein (RNP) complex, an elongated RNP with Cmr2 and Cmr3 as the base, with Cmr4 and Cmr5 forming a helical core along the mature crRNA (39 or 45 nt in length), while the complex is capped by Cmr6 and Cmr1. The 5' end of the crRNA is bound to Cmr2 and Cmr3, while Cmr6 and a Cmr1 subunit (Cmr1-1 or Cmr1-2) cap the 3' end of the crRNA. The target RNA lies antiparallel to the crRNA, with its 5' end near Cmr1 and Cmr6 and its 3' end near Cmr2 and Cmr3; major target cleavage occurs nears the junction of Cmr1/Cmr6 and Cmr4/Cmr, with minor cleavage occurring at 6 nt intervals which coincide with the proposed spacing of Cmr4 subunits.

The protein localises to the cytoplasm. In terms of biological role, CRISPR (clustered regularly interspaced short palindromic repeat), is an adaptive immune system that provides protection against mobile genetic elements (viruses, transposable elements and conjugative plasmids). CRISPR clusters contain sequences complementary to antecedent mobile elements and target invading nucleic acids. CRISPR clusters are transcribed and processed into CRISPR RNA (crRNA), formerly called psiRNA (prokaryotic silencing) in this organism. Part of the Cmr ribonucleoprotein complex which has divalent cation-dependent endoribonuclease activity specific for ssRNA complementary to the crRNA (target RNA), generating 5' hydroxy- and 3' phosphate or 2'-3' cyclic phosphate termini. Cmr4 is probably the subunit that cleaves target RNA. Cmr complex does not cleave ssDNA complementary to the crRNA. Cleavage of invading RNA is guided by the crRNA; substrate cleavage occurs a fixed distance (14 nt) from the 3' end of the crRNA. In vitro reconstitution shows Cmr1-2 and Cmr5 are not absolutely necessary for target cleavage. In Pyrococcus furiosus (strain ATCC 43587 / DSM 3638 / JCM 8422 / Vc1), this protein is CRISPR system Cmr subunit Cmr1-1.